Here is a 492-residue protein sequence, read N- to C-terminus: Catalase (492 aa).

Catalysis depends on residues H65 and N138. Y348 lines the heme pocket.

This sequence belongs to the catalase family. In terms of assembly, homotetramer. The cofactor is heme.

It localises to the cytoplasm. The protein localises to the cytosol. Its subcellular location is the peroxisome matrix. It carries out the reaction 2 H2O2 = O2 + 2 H2O. Functionally, catalyzes the degradation of hydrogen peroxide (H(2)O(2)) generated by peroxisomal oxidases to water and oxygen, thereby protecting cells from the toxic effects of hydrogen peroxide. The protein is Catalase (CATA) of Triticum aestivum (Wheat).